The sequence spans 93 residues: Small ribosomal subunit protein bS20 (93 aa).

The segment at Lys-72–Ser-93 is disordered. A compositionally biased stretch (basic residues) spans Thr-74–Arg-84.

This sequence belongs to the bacterial ribosomal protein bS20 family.

In terms of biological role, binds directly to 16S ribosomal RNA. This is Small ribosomal subunit protein bS20 from Carboxydothermus hydrogenoformans (strain ATCC BAA-161 / DSM 6008 / Z-2901).